We begin with the raw amino-acid sequence, 251 residues long: Pyrroloquinoline-quinone synthase (251 aa).

This sequence belongs to the PqqC family.

It carries out the reaction 6-(2-amino-2-carboxyethyl)-7,8-dioxo-1,2,3,4,7,8-hexahydroquinoline-2,4-dicarboxylate + 3 O2 = pyrroloquinoline quinone + 2 H2O2 + 2 H2O + H(+). It functions in the pathway cofactor biosynthesis; pyrroloquinoline quinone biosynthesis. Ring cyclization and eight-electron oxidation of 3a-(2-amino-2-carboxyethyl)-4,5-dioxo-4,5,6,7,8,9-hexahydroquinoline-7,9-dicarboxylic-acid to PQQ. The sequence is that of Pyrroloquinoline-quinone synthase from Pseudomonas putida (strain GB-1).